Here is a 309-residue protein sequence, read N- to C-terminus: DSC E3 ubiquitin ligase complex subunit C (309 aa).

N61 is a glycosylation site (N-linked (GlcNAc...) asparagine). Disordered regions lie at residues 88 to 110 and 148 to 177; these read LPPS…GKGK and EQAD…FDRL. Helical transmembrane passes span 257–277 and 289–309; these read DDML…AMWL and GLAV…RIMN.

This sequence belongs to the dsc3 family. In terms of assembly, component of the DSC E3 ubiquitin ligase complex composed of dscA, dscB, dscC and dscD.

Its subcellular location is the endoplasmic reticulum membrane. The protein operates within protein modification; protein ubiquitination. Component of the DSC E3 ubiquitin ligase complex which is required for the srbA transcriptional activator proteolytic cleavage to release the soluble transcription factor from the membrane in low oxygen or sterol conditions. Required for growth during hypoxia and triazole drug susceptibility, as well as for virulence in a murine model of invasive pulmonary aspergillosis (IPA). This Aspergillus fumigatus (strain CBS 144.89 / FGSC A1163 / CEA10) (Neosartorya fumigata) protein is DSC E3 ubiquitin ligase complex subunit C.